We begin with the raw amino-acid sequence, 556 residues long: Tripartite motif-containing protein 16 (556 aa).

Residues 1-60 (MAELDLIAPGPLTGVTAHPLAPLGPDPVSAIPVEKEDADPLSKSGEETQEQGHDPAELGA) are disordered. Residues 33-56 (VEKEDADPLSKSGEETQEQGHDPA) show a composition bias toward basic and acidic residues. 2 B box-type zinc fingers span residues 64–113 (EDQI…LTEP) and 117–156 (QDLRTCPAHHSPLVSFCHTHQQCICQECGEGEHRGDSTVS). Phosphoserine is present on Ser-107. Coiled coils occupy residues 163 to 266 (NKEV…RLAA) and 312 to 332 (NLIQLLESYKEKLQEFSREEE). A Phosphoserine modification is found at Ser-195. The B30.2/SPRY domain occupies 347–545 (YRTSKPEPRT…RIVDLGEEPE (199 aa)).

The protein belongs to the TRIM/RBCC family. Homodimerizes via its coiled-coil domain. Heterodimerizes with MID1, TRIM24 and PML. Interacts with Galectin-3/LGALS3 in a ULK1-dependent manner; this interaction mediates autophagy of damage endomembranes. Interacts with BECN1. Interacts with ATG16L1. Interacts with p62/SQSTM and LC3B/MAP1LC3B. In terms of processing, phosphorylated by ULK1. Auto-ubiquitinates via its B-Boxes. In terms of tissue distribution, widely expressed. Expressed in basal keratinocytes.

The protein localises to the cytoplasm. It carries out the reaction S-ubiquitinyl-[E2 ubiquitin-conjugating enzyme]-L-cysteine + [acceptor protein]-L-lysine = [E2 ubiquitin-conjugating enzyme]-L-cysteine + N(6)-ubiquitinyl-[acceptor protein]-L-lysine.. Its function is as follows. E3 ubiquitin ligase that plays an essential role in the organization of autophagic response and ubiquitination upon lysosomal and phagosomal damages. Plays a role in the stress-induced biogenesis and degradation of protein aggresomes by regulating the p62-KEAP1-NRF2 signaling and particularly by modulating the ubiquitination levels and thus stability of NRF2. Acts as a scaffold protein and facilitates autophagic degradation of protein aggregates by interacting with p62/SQSTM, ATG16L1 and LC3B/MAP1LC3B. In turn, protects the cell against oxidative stress-induced cell death as a consequence of endomembrane damage. The chain is Tripartite motif-containing protein 16 (Trim16) from Mus musculus (Mouse).